A 195-amino-acid chain; its full sequence is Cytochrome c oxidase assembly protein CtaG (195 aa).

Over 1 to 7 (MSGGKPR) the chain is Cytoplasmic. A helical; Signal-anchor for type II membrane protein transmembrane segment spans residues 8-30 (SNTRTVAMLAGVVVLMGALSWAA). Over 31-195 (VPFYSWFCKV…LDAKTEPTVN (165 aa)) the chain is Periplasmic.

This sequence belongs to the COX11/CtaG family.

It localises to the cell inner membrane. Functionally, exerts its effect at some terminal stage of cytochrome c oxidase synthesis, probably by being involved in the insertion of the copper B into subunit I. The protein is Cytochrome c oxidase assembly protein CtaG of Paracoccus denitrificans (strain Pd 1222).